Consider the following 84-residue polypeptide: Putative defensin-like protein 63 (84 aa).

The N-terminal stretch at 1-21 (MDIRKTYVIIFFVGILTISFS) is a signal peptide. 4 cysteine pairs are disulfide-bonded: Cys-40–Cys-81, Cys-44–Cys-67, Cys-53–Cys-79, and Cys-57–Cys-80.

The protein belongs to the DEFL family.

Its subcellular location is the secreted. The sequence is that of Putative defensin-like protein 63 from Arabidopsis thaliana (Mouse-ear cress).